The following is a 183-amino-acid chain: ATP-dependent protease subunit HslV (183 aa).

The active site involves Thr13. Residues Gly168, Cys171, and Thr174 each coordinate Na(+).

This sequence belongs to the peptidase T1B family. HslV subfamily. As to quaternary structure, a double ring-shaped homohexamer of HslV is capped on each side by a ring-shaped HslU homohexamer. The assembly of the HslU/HslV complex is dependent on binding of ATP.

The protein resides in the cytoplasm. The catalysed reaction is ATP-dependent cleavage of peptide bonds with broad specificity.. Allosterically activated by HslU binding. Its function is as follows. Protease subunit of a proteasome-like degradation complex believed to be a general protein degrading machinery. The sequence is that of ATP-dependent protease subunit HslV from Xanthomonas euvesicatoria pv. vesicatoria (strain 85-10) (Xanthomonas campestris pv. vesicatoria).